Here is a 233-residue protein sequence, read N- to C-terminus: Biosynthetic peptidoglycan transglycosylase (233 aa).

The chain crosses the membrane as a helical span at residues 8 to 28 (LIALPVGIFIFFNAYVYGNII).

It belongs to the glycosyltransferase 51 family.

It localises to the cell inner membrane. The catalysed reaction is [GlcNAc-(1-&gt;4)-Mur2Ac(oyl-L-Ala-gamma-D-Glu-L-Lys-D-Ala-D-Ala)](n)-di-trans,octa-cis-undecaprenyl diphosphate + beta-D-GlcNAc-(1-&gt;4)-Mur2Ac(oyl-L-Ala-gamma-D-Glu-L-Lys-D-Ala-D-Ala)-di-trans,octa-cis-undecaprenyl diphosphate = [GlcNAc-(1-&gt;4)-Mur2Ac(oyl-L-Ala-gamma-D-Glu-L-Lys-D-Ala-D-Ala)](n+1)-di-trans,octa-cis-undecaprenyl diphosphate + di-trans,octa-cis-undecaprenyl diphosphate + H(+). It functions in the pathway cell wall biogenesis; peptidoglycan biosynthesis. In terms of biological role, peptidoglycan polymerase that catalyzes glycan chain elongation from lipid-linked precursors. This is Biosynthetic peptidoglycan transglycosylase from Neisseria gonorrhoeae (strain NCCP11945).